The sequence spans 485 residues: Trigger factor (485 aa).

Positions 169–261 constitute a PPIase FKBP-type domain; that stretch reads GDVAIVDFVG…LKELKEKELP (93 aa).

The protein belongs to the FKBP-type PPIase family. Tig subfamily.

The protein resides in the cytoplasm. It carries out the reaction [protein]-peptidylproline (omega=180) = [protein]-peptidylproline (omega=0). In terms of biological role, involved in protein export. Acts as a chaperone by maintaining the newly synthesized protein in an open conformation. Functions as a peptidyl-prolyl cis-trans isomerase. This chain is Trigger factor, found in Trichodesmium erythraeum (strain IMS101).